The primary structure comprises 126 residues: Nascent polypeptide-associated complex protein (126 aa).

Residues 10–77 form the NAC-A/B domain; the sequence is PRMMKQMQKM…AKKVAKAEEK (68 aa).

Belongs to the NAC-alpha family. In terms of assembly, homodimer. Interacts with the ribosome. Binds ribosomal RNA.

Functionally, contacts the emerging nascent chain on the ribosome. The protein is Nascent polypeptide-associated complex protein of Methanococcus maripaludis (strain C6 / ATCC BAA-1332).